The sequence spans 651 residues: DNA topoisomerase 3 (651 aa).

The 134-residue stretch at 1 to 134 folds into the Toprim domain; sequence MRLFIAEKPS…KRDKILRCLI (134 aa). Mg(2+)-binding residues include glutamate 7, aspartate 103, and aspartate 105. The region spanning 155-612 is the Topo IA-type catalytic domain; it reads FIPLATSALA…NLNQILPDLV (458 aa). The tract at residues 194–199 is interaction with DNA; that stretch reads SVGRVQ. Tyrosine 337 (O-(5'-phospho-DNA)-tyrosine intermediate) is an active-site residue. Residues 631 to 651 are disordered; that stretch reads SDRAKPKSAVKKSSKSNGETD.

Belongs to the type IA topoisomerase family. The cofactor is Mg(2+).

It carries out the reaction ATP-independent breakage of single-stranded DNA, followed by passage and rejoining.. Releases the supercoiling and torsional tension of DNA, which is introduced during the DNA replication and transcription, by transiently cleaving and rejoining one strand of the DNA duplex. Introduces a single-strand break via transesterification at a target site in duplex DNA. The scissile phosphodiester is attacked by the catalytic tyrosine of the enzyme, resulting in the formation of a DNA-(5'-phosphotyrosyl)-enzyme intermediate and the expulsion of a 3'-OH DNA strand. The free DNA strand then undergoes passage around the unbroken strand, thus removing DNA supercoils. Finally, in the religation step, the DNA 3'-OH attacks the covalent intermediate to expel the active-site tyrosine and restore the DNA phosphodiester backbone. This chain is DNA topoisomerase 3, found in Haemophilus influenzae (strain ATCC 51907 / DSM 11121 / KW20 / Rd).